A 77-amino-acid polypeptide reads, in one-letter code: Acyl carrier protein (77 aa).

Residues 2–77 enclose the Carrier domain; the sequence is ADALERVTKI…DAVNYINSKQ (76 aa). The residue at position 37 (serine 37) is an O-(pantetheine 4'-phosphoryl)serine.

The protein belongs to the acyl carrier protein (ACP) family. In terms of processing, 4'-phosphopantetheine is transferred from CoA to a specific serine of apo-ACP by AcpS. This modification is essential for activity because fatty acids are bound in thioester linkage to the sulfhydryl of the prosthetic group.

It is found in the cytoplasm. Its pathway is lipid metabolism; fatty acid biosynthesis. In terms of biological role, carrier of the growing fatty acid chain in fatty acid biosynthesis. The sequence is that of Acyl carrier protein from Bacillus licheniformis (strain ATCC 14580 / DSM 13 / JCM 2505 / CCUG 7422 / NBRC 12200 / NCIMB 9375 / NCTC 10341 / NRRL NRS-1264 / Gibson 46).